An 806-amino-acid chain; its full sequence is U3 small nucleolar RNA-associated protein 17 (806 aa).

4 WD repeats span residues 266-305 (WHANPLNGLSWALNGEYLLSGGQEGVLVLWQMETSHRQFL), 448-489 (RNGL…KTWV), 499-538 (GNLEVVTALKMMTSSNRFITVGTDATLRIWALLPGSSAWK), and 598-635 (PHGGQLENAQFLNAEHCVIISQRRLLVWNVISASVQWT).

Component of the ribosomal small subunit (SSU) processome.

The protein localises to the nucleus. It is found in the nucleolus. Involved in nucleolar processing of pre-18S ribosomal RNA. Required for optimal pre-ribosomal RNA transcription by RNA polymerase I together with a subset of U3 proteins required for transcription (t-UTPs). This is U3 small nucleolar RNA-associated protein 17 (utp17) from Schizosaccharomyces pombe (strain 972 / ATCC 24843) (Fission yeast).